Here is a 531-residue protein sequence, read N- to C-terminus: 2,3-bisphosphoglycerate-independent phosphoglycerate mutase (531 aa).

Mn(2+) contacts are provided by Asp15 and Ser65. Ser65 serves as the catalytic Phosphoserine intermediate. Substrate contacts are provided by residues His126, Arg155 to Asp156, Arg187, Arg193, Arg257 to Arg260, and Lys330. Mn(2+) contacts are provided by Asp397, His401, Asp438, His439, and His456.

The protein belongs to the BPG-independent phosphoglycerate mutase family. In terms of assembly, monomer. It depends on Mn(2+) as a cofactor.

It catalyses the reaction (2R)-2-phosphoglycerate = (2R)-3-phosphoglycerate. The protein operates within carbohydrate degradation; glycolysis; pyruvate from D-glyceraldehyde 3-phosphate: step 3/5. Functionally, catalyzes the interconversion of 2-phosphoglycerate and 3-phosphoglycerate. The sequence is that of 2,3-bisphosphoglycerate-independent phosphoglycerate mutase from Thermosynechococcus vestitus (strain NIES-2133 / IAM M-273 / BP-1).